Here is a 397-residue protein sequence, read N- to C-terminus: Putative gustatory receptor 85a (397 aa).

Over 1 to 56 (MYSLIEAQLLGGKLVNRVMASLRRIIQRSLGYFCALNGILDFNTDIGTGNLRRYRV) the chain is Cytoplasmic. The helical transmembrane segment at 57 to 77 (LFMYRLLHNFAVISLTLKFLF) threads the bilayer. The Extracellular segment spans residues 78–90 (DFTDHFKYIESST). The chain crosses the membrane as a helical span at residues 91–111 (LITVNFFTYFTLVFFALLSSM). At 112–151 (GSCYQWQNRILAVLKELKHQRDLSRHMGYRVPRSKQNSID) the chain is on the cytoplasmic side. A helical membrane pass occupies residues 152 to 172 (YLLFALTVLLILRLSIHLATF). The Extracellular portion of the chain corresponds to 173–186 (TLSARMGFNHPCNC). Residues 187–207 (FLPECMIFSMNYLLFAILAEI) traverse the membrane as a helical segment. At 208–268 (TRCWWSLQSG…RYVTLAYMAR (61 aa)) the chain is on the cytoplasmic side. Residues 269–289 (NLWSGIVAGYLLVRFVIGNGL) traverse the membrane as a helical segment. The Extracellular portion of the chain corresponds to 290-293 (QDVE). A helical transmembrane segment spans residues 294–314 (LVYLVFSFITCIQPLMLSLLV). Residues 315–375 (NSMTSTTGSL…FRINRSLAFR (61 aa)) are Cytoplasmic-facing. The helical transmembrane segment at 376-396 (SASLILVHVLYMVQSDYISIT) threads the bilayer. Position 397 (Asn397) is a topological domain, extracellular.

It belongs to the insect chemoreceptor superfamily. Gustatory receptor (GR) family. Gr22e subfamily.

It is found in the cell membrane. Functionally, probable gustatory receptor which mediates acceptance or avoidance behavior, depending on its substrates. In Drosophila melanogaster (Fruit fly), this protein is Putative gustatory receptor 85a (Gr85a).